A 228-amino-acid polypeptide reads, in one-letter code: Protein GrpE (228 aa).

Disordered regions lie at residues 1-31 (MADE…NRAA) and 209-228 (GVSK…EGNG).

It belongs to the GrpE family. In terms of assembly, homodimer.

It localises to the cytoplasm. Its function is as follows. Participates actively in the response to hyperosmotic and heat shock by preventing the aggregation of stress-denatured proteins, in association with DnaK and GrpE. It is the nucleotide exchange factor for DnaK and may function as a thermosensor. Unfolded proteins bind initially to DnaJ; upon interaction with the DnaJ-bound protein, DnaK hydrolyzes its bound ATP, resulting in the formation of a stable complex. GrpE releases ADP from DnaK; ATP binding to DnaK triggers the release of the substrate protein, thus completing the reaction cycle. Several rounds of ATP-dependent interactions between DnaJ, DnaK and GrpE are required for fully efficient folding. This chain is Protein GrpE, found in Brucella anthropi (strain ATCC 49188 / DSM 6882 / CCUG 24695 / JCM 21032 / LMG 3331 / NBRC 15819 / NCTC 12168 / Alc 37) (Ochrobactrum anthropi).